The sequence spans 196 residues: Probable inactive nicotinamidase At3g16190 (196 aa).

Belongs to the isochorismatase family.

In terms of biological role, does not possess nicotinamidase activity in vitro. This Arabidopsis thaliana (Mouse-ear cress) protein is Probable inactive nicotinamidase At3g16190.